The sequence spans 442 residues: D-serine dehydratase (442 aa).

The residue at position 118 (lysine 118) is an N6-(pyridoxal phosphate)lysine.

Belongs to the serine/threonine dehydratase family. DsdA subfamily. As to quaternary structure, monomer. Pyridoxal 5'-phosphate serves as cofactor.

It carries out the reaction D-serine = pyruvate + NH4(+). The sequence is that of D-serine dehydratase from Shigella sonnei (strain Ss046).